The sequence spans 724 residues: Catalase-peroxidase (724 aa).

The segment at residues 98-226 (WHSAGSYRIA…LAAVMMGLIY (129 aa)) is a cross-link (tryptophyl-tyrosyl-methioninium (Trp-Tyr) (with M-252)). His99 (proton acceptor) is an active-site residue. Residues 226–252 (YVNPEGVDGHPDPQKTANDVRVTFARM) constitute a cross-link (tryptophyl-tyrosyl-methioninium (Tyr-Met) (with W-98)). His267 is a heme b binding site.

The protein belongs to the peroxidase family. Peroxidase/catalase subfamily. Homodimer or homotetramer. The cofactor is heme b. Post-translationally, formation of the three residue Trp-Tyr-Met cross-link is important for the catalase, but not the peroxidase activity of the enzyme.

The enzyme catalyses H2O2 + AH2 = A + 2 H2O. It carries out the reaction 2 H2O2 = O2 + 2 H2O. In terms of biological role, bifunctional enzyme with both catalase and broad-spectrum peroxidase activity. The sequence is that of Catalase-peroxidase from Edwardsiella tarda.